A 251-amino-acid chain; its full sequence is Chromobox protein homolog 7 (251 aa).

A Chromo domain is found at 11-69; the sequence is FAVESIRKKRVRKGKVEYLVKWKGWPPKYSTWEPEEHILDPRLVMAYEEKEERDRASGY. Positions 190-220 are disordered; that stretch reads EPAAQPPEEEADADLAEGPPPWTPALPSSEV. Residues 223-236 form a required for cellular lifespan extension region; sequence TDITANSITVTFRE.

Component of a PRC1-like complex. Interacts with RING1 and RNF2/RING1B, but not with BMI1, EED or EZH2. Interacts with PCGF1, PCGF2, PCGF3, PCGF5 and PCGF6.

The protein resides in the nucleus. Functionally, component of a Polycomb group (PcG) multiprotein PRC1-like complex, a complex class required to maintain the transcriptionally repressive state of many genes, including Hox genes, throughout development. PcG PRC1 complex acts via chromatin remodeling and modification of histones; it mediates monoubiquitination of histone H2A 'Lys-119', rendering chromatin heritably changed in its expressibility. Promotes histone H3 trimethylation at 'Lys-9' (H3K9me3). Binds to trimethylated lysine residues in histones, and possibly also other proteins. Regulator of cellular lifespan by maintaining the repression of CDKN2A, but not by inducing telomerase activity. The protein is Chromobox protein homolog 7 (CBX7) of Homo sapiens (Human).